Here is a 276-residue protein sequence, read N- to C-terminus: MAIKKYKPTTNGCRNMSVSAFSEITTQTPERSLLVSHKDQAGRNNQGKITVRHRGGGVKRKYRLIDFKRNKDNIVGKVATIEYDPNRSANIALIHYVDGEKRYILAPKGLTVGMQIVSGKETDIKVANCLPLMNIPVGTTVHNIELKPGKGGQIARSAGSSCQIISREDKYVLLRLQSGEVRKVLATCRATIGEIGNESYKLINYGKAGKKRFLGIRPTVRGSAMNPNDHPHGGGEGRAPIGRKSPMTPWGKKARGVKTRDRKKASNALIIRRRKK.

Positions 221–276 are disordered; the sequence is RGSAMNPNDHPHGGGEGRAPIGRKSPMTPWGKKARGVKTRDRKKASNALIIRRRKK. Residues 252-276 are compositionally biased toward basic residues; sequence KKARGVKTRDRKKASNALIIRRRKK.

Belongs to the universal ribosomal protein uL2 family. In terms of assembly, part of the 50S ribosomal subunit. Forms a bridge to the 30S subunit in the 70S ribosome.

Its function is as follows. One of the primary rRNA binding proteins. Required for association of the 30S and 50S subunits to form the 70S ribosome, for tRNA binding and peptide bond formation. It has been suggested to have peptidyltransferase activity; this is somewhat controversial. Makes several contacts with the 16S rRNA in the 70S ribosome. The chain is Large ribosomal subunit protein uL2 from Aster yellows witches'-broom phytoplasma (strain AYWB).